Reading from the N-terminus, the 151-residue chain is D-aminoacyl-tRNA deacylase (151 aa).

The Gly-cisPro motif, important for rejection of L-amino acids motif lies at 137–138; it reads GP.

Belongs to the DTD family. In terms of assembly, homodimer.

Its subcellular location is the cytoplasm. The enzyme catalyses glycyl-tRNA(Ala) + H2O = tRNA(Ala) + glycine + H(+). It carries out the reaction a D-aminoacyl-tRNA + H2O = a tRNA + a D-alpha-amino acid + H(+). Its function is as follows. An aminoacyl-tRNA editing enzyme that deacylates mischarged D-aminoacyl-tRNAs. Also deacylates mischarged glycyl-tRNA(Ala), protecting cells against glycine mischarging by AlaRS. Acts via tRNA-based rather than protein-based catalysis; rejects L-amino acids rather than detecting D-amino acids in the active site. By recycling D-aminoacyl-tRNA to D-amino acids and free tRNA molecules, this enzyme counteracts the toxicity associated with the formation of D-aminoacyl-tRNA entities in vivo and helps enforce protein L-homochirality. The protein is D-aminoacyl-tRNA deacylase of Azoarcus sp. (strain BH72).